Reading from the N-terminus, the 403-residue chain is TPR repeat-containing protein Synpcc7942_0270 (403 aa).

TPR repeat units lie at residues 208 to 243 (AYLC…PEPA), 244 to 282 (VRYE…AIHK), 283 to 316 (LGAW…APQA), 317 to 350 (TVAL…DPND), and 351 to 387 (PSLY…QGSP).

In Synechococcus elongatus (strain ATCC 33912 / PCC 7942 / FACHB-805) (Anacystis nidulans R2), this protein is TPR repeat-containing protein Synpcc7942_0270.